Consider the following 450-residue polypeptide: Runt-related transcription factor 1 (450 aa).

Residues 1–25 form a disordered region; the sequence is MRIPVDASTSRRFTPPSTALSPGKM. Residues 7 to 20 show a composition bias toward polar residues; that stretch reads ASTSRRFTPPSTAL. Thr14 carries the post-translational modification Phosphothreonine. Ser21 bears the Phosphoserine mark. Lys24 and Lys43 each carry N6-acetyllysine. Positions 50-178 constitute a Runt domain; sequence SMVEVLADHP…TVDGPREPRR (129 aa). The interaction with DNA stretch occupies residues 80-84; the sequence is RCNKT. Residues Asn112, Glu116, Arg139, and Val170 each contribute to the chloride site. 2 interaction with DNA regions span residues 135–143 and 168–177; these read RFVGRSGRG and ITVDGPREPR. 2 disordered regions span residues 170–195 and 209–252; these read VDGPREPRRHRQKLDDQTKPGSLSFS and MRVS…SPPW. Phosphoserine occurs at positions 193 and 212. The span at 222–247 shows a compositional bias: polar residues; the sequence is PRASLNHSTAFNPQPQSQMQDARQIQ. A Phosphoserine; by HIPK2 modification is found at Ser249. Phosphoserine occurs at positions 266 and 267. The residue at position 272 (Thr272) is a Phosphothreonine; by HIPK2. At Ser275 the chain carries Phosphoserine; by HIPK2. Positions 290 to 369 are interaction with KAT6A; it reads SSRLSTAPDL…SQAQAGPFQT (80 aa). Thr295 bears the Phosphothreonine mark. The interval 306–398 is interaction with KAT6B; that stretch reads RQFPTLPSIS…MVGGERSPPR (93 aa). The interaction with FOXP3 stretch occupies residues 360 to 400; that stretch reads SQAQAGPFQTGSPSYHLYYGTSAGSYQFSMVGGERSPPRIL. Residues 410 to 450 form a disordered region; that stretch reads AALLNPSLPSQSDVVETEGSHSNSPTNMPPARLEEAVWRPY. The segment covering 416 to 435 has biased composition (polar residues); sequence SLPSQSDVVETEGSHSNSPT. The residue at position 433 (Ser433) is a Phosphoserine. A compositionally biased stretch (basic and acidic residues) spans 441–450; the sequence is RLEEAVWRPY.

Heterodimer with CBFB. RUNX1 binds DNA as a monomer and through the Runt domain. DNA-binding is increased by heterodimerization. Interacts with TLE1 and ALYREF/THOC4. Interacts with ELF1, ELF2 and SPI1. Interacts via its Runt domain with the ELF4 N-terminal region. Interaction with ELF2 isoform 2 (NERF-1a) may act to repress RUNX1-mediated transactivation. Interacts with KAT6A and KAT6B. Interacts with SUV39H1, leading to abrogation of transactivating and DNA-binding properties of RUNX1. Interacts with YAP1 and HIPK2. Interaction with CDK6 prevents myeloid differentiation, reducing its transcription transactivation activity. Found in a complex with PRMT5, RUNX1 and CBFB. Interacts with FOXP3. Interacts with TBX21. Interacts with DPF2. Phosphorylated in its C-terminus upon IL-6 treatment. Phosphorylation enhances interaction with KAT6A. Post-translationally, methylated. In terms of processing, phosphorylated in Ser-249 Thr-272 and Ser-275 by HIPK2 when associated with CBFB and DNA. This phosphorylation promotes subsequent EP300 phosphorylation. In terms of tissue distribution, expressed in skeletal muscle.

It localises to the nucleus. Functionally, CBF binds to the core site, 5'-PYGPYGGT-3', of a number of enhancers and promoters, including murine leukemia virus, polyomavirus enhancer, T-cell receptor enhancers, LCK, IL-3 and GM-CSF promoters. The alpha subunit binds DNA and appears to have a role in the development of normal hematopoiesis. Isoform AML-1L interferes with the transactivation activity of RUNX1. Acts synergistically with ELF4 to transactivate the IL-3 promoter and with ELF2 to transactivate the BLK promoter. Inhibits KAT6B-dependent transcriptional activation. Controls the anergy and suppressive function of regulatory T-cells (Treg) by associating with FOXP3. Activates the expression of IL2 and IFNG and down-regulates the expression of TNFRSF18, IL2RA and CTLA4, in conventional T-cells. Positively regulates the expression of RORC in T-helper 17 cells. This Rattus norvegicus (Rat) protein is Runt-related transcription factor 1 (Runx1).